A 245-amino-acid polypeptide reads, in one-letter code: Probable phosphatase YcdX (245 aa).

The Zn(2+) site is built by His7, His9, His15, His40, Glu73, His101, His131, Asp192, and His194.

Belongs to the PHP family. As to quaternary structure, homotrimer. Zn(2+) serves as cofactor.

In Escherichia coli O139:H28 (strain E24377A / ETEC), this protein is Probable phosphatase YcdX.